We begin with the raw amino-acid sequence, 550 residues long: Chaperonin GroEL (550 aa).

ATP-binding positions include 30-33 (TLGP), lysine 51, 87-91 (DGTTT), glycine 415, 479-481 (NAA), and aspartate 495.

It belongs to the chaperonin (HSP60) family. Forms a cylinder of 14 subunits composed of two heptameric rings stacked back-to-back. Interacts with the co-chaperonin GroES.

Its subcellular location is the cytoplasm. It carries out the reaction ATP + H2O + a folded polypeptide = ADP + phosphate + an unfolded polypeptide.. Together with its co-chaperonin GroES, plays an essential role in assisting protein folding. The GroEL-GroES system forms a nano-cage that allows encapsulation of the non-native substrate proteins and provides a physical environment optimized to promote and accelerate protein folding. This Polynucleobacter asymbioticus (strain DSM 18221 / CIP 109841 / QLW-P1DMWA-1) (Polynucleobacter necessarius subsp. asymbioticus) protein is Chaperonin GroEL.